Consider the following 406-residue polypeptide: MNLSLKVLDKRGFLKQCTNLEELSTLMDREKIVFYVGVDATSASLHIGHLIPFMVMLHLQRQGHIPIILIGGGTTKIGDPSGKDSMRKILLKEDIDENVKTISSQLLKIIDLSNGGYILNNAEWLDGINYIEFLREVGIYFSVNRMLSFETYKRRLKDGLSFIEFNYQLLQSYDFYMLSRMKNCKLQIGGDDQWGNIVSGVDLVNRKSGNKVFGLTLPLITRSDGNKMGKSEKGAVYLDSELYSVYDFYQYFRNIPDLDVKKFLYLFTFLEEEEIERIASVKGQLLNNAKEILAFEITKIVHGKDEALKASSAAKAAFKGGDGRADIPFFKLELTNLEESILLVDLMVLAKVVSSKSEARRLIDSGGVYIDKVRVGDQNYCLCKDNFINGEIELKIGKKKILRIVL.

An L-tyrosine-binding site is contributed by Tyr35. The short motif at 40–49 (ATSASLHIGH) is the 'HIGH' region element. L-tyrosine is bound by residues Tyr167 and Gln171. Positions 227–231 (KMGKS) match the 'KMSKS' region motif. Lys230 serves as a coordination point for ATP. One can recognise an S4 RNA-binding domain in the interval 341 to 405 (ILLVDLMVLA…IGKKKILRIV (65 aa)).

The protein belongs to the class-I aminoacyl-tRNA synthetase family. TyrS type 1 subfamily. In terms of assembly, homodimer.

The protein resides in the cytoplasm. It carries out the reaction tRNA(Tyr) + L-tyrosine + ATP = L-tyrosyl-tRNA(Tyr) + AMP + diphosphate + H(+). Catalyzes the attachment of tyrosine to tRNA(Tyr) in a two-step reaction: tyrosine is first activated by ATP to form Tyr-AMP and then transferred to the acceptor end of tRNA(Tyr). This is Tyrosine--tRNA ligase from Borrelia recurrentis (strain A1).